We begin with the raw amino-acid sequence, 1490 residues long: Leucine-rich repeat-containing protein 7 (1490 aa).

LRR repeat units lie at residues isoleucine 23–phenylalanine 44, threonine 47–cysteine 68, alanine 70–leucine 91, asparagine 93–cysteine 114, cysteine 116–leucine 137, asparagine 139–valine 161, lysine 162–leucine 183, glutamine 185–isoleucine 206, asparagine 208–leucine 229, methionine 231–glutamate 253, alanine 254–leucine 275, lysine 277–leucine 298, leucine 300–leucine 321, serine 323–cysteine 344, asparagine 346–methionine 367, arginine 369–lysine 391, and glutamate 392–alanine 413. Serine 439, serine 441, and serine 443 each carry phosphoserine. Residues lysine 663–histidine 676 show a composition bias toward basic and acidic residues. Disordered stretches follow at residues lysine 663–methionine 704, alanine 785–arginine 807, and glutamate 822–proline 899. Residues cysteine 677 to threonine 686 are compositionally biased toward polar residues. Residues tyrosine 687 to serine 700 are compositionally biased toward low complexity. Threonine 831 is subject to Phosphothreonine. Serine 850 carries the phosphoserine modification. Low complexity predominate over residues proline 859–leucine 871. Phosphothreonine is present on threonine 865. Phosphoserine is present on serine 869. Over residues proline 872–threonine 882 the composition is skewed to basic and acidic residues. Phosphoserine occurs at positions 947, 949, and 1118. Residues proline 1134–glycine 1144 show a composition bias toward basic and acidic residues. Disordered regions lie at residues proline 1134–isoleucine 1158 and glutamine 1196–valine 1218. Omega-N-methylarginine is present on arginine 1149. The segment covering glutamine 1196–proline 1217 has biased composition (polar residues). At serine 1233 the chain carries Phosphoserine. Disordered regions lie at residues glycine 1238–lysine 1265 and arginine 1282–leucine 1312. The segment covering lysine 1243–cysteine 1263 has biased composition (basic and acidic residues). The segment covering threonine 1286 to tryptophan 1307 has biased composition (polar residues). Serine 1288 and serine 1392 each carry phosphoserine. The 91-residue stretch at glutamate 1398 to leucine 1488 folds into the PDZ domain.

This sequence belongs to the LAP (LRR and PDZ) protein family. Interacts with CNKSR2 and DLG4. Interacts with CTNND2/Catenin delta-2. Forms a complex with N-cadherin through CTNND2. Interacts with CAMK2A. In terms of tissue distribution, expressed in brain (at protein level).

The protein resides in the cytoplasm. It localises to the postsynaptic density. Required for normal synaptic spine architecture and function. Necessary for DISC1 and GRM5 localization to postsynaptic density complexes and for both N-methyl D-aspartate receptor-dependent and metabotropic glutamate receptor-dependent long term depression. In Mus musculus (Mouse), this protein is Leucine-rich repeat-containing protein 7 (Lrrc7).